Consider the following 465-residue polypeptide: Sodium-coupled neutral amino acid transporter 7 (465 aa).

A run of 11 helical transmembrane segments spans residues 54 to 74 (AVFI…PAAF), 82 to 102 (AGVT…VILA), 128 to 148 (ICEL…LIII), 177 to 197 (FTIT…KEIG), 204 to 224 (TLSV…YIWP), 244 to 264 (FNAM…VPVF), 275 to 295 (WWGV…GTGV), 318 to 338 (VAVA…YPIL), 370 to 390 (ILQT…IPDI), 394 to 414 (ISLI…LCLI), and 427 to 447 (SWNA…FIFG).

Belongs to the amino acid/polyamine transporter 2 family.

It localises to the lysosome membrane. Its subcellular location is the cell projection. It is found in the axon. The catalysed reaction is L-asparagine(in) + Na(+)(in) = L-asparagine(out) + Na(+)(out). It carries out the reaction L-glutamine(in) + Na(+)(in) = L-glutamine(out) + Na(+)(out). Functionally, symporter that selectively cotransports sodium ions and amino acids, such as L-glutamine and L-asparagine from the lysosome into the cytoplasm and may participates in mTORC1 activation. The transport activity requires an acidic lysosomal lumen. In Danio rerio (Zebrafish), this protein is Sodium-coupled neutral amino acid transporter 7.